Here is a 104-residue protein sequence, read N- to C-terminus: Large ribosomal subunit protein uL24 (104 aa).

This sequence belongs to the universal ribosomal protein uL24 family. As to quaternary structure, part of the 50S ribosomal subunit.

Its function is as follows. One of two assembly initiator proteins, it binds directly to the 5'-end of the 23S rRNA, where it nucleates assembly of the 50S subunit. Functionally, one of the proteins that surrounds the polypeptide exit tunnel on the outside of the subunit. The polypeptide is Large ribosomal subunit protein uL24 (Buchnera aphidicola subsp. Baizongia pistaciae (strain Bp)).